The following is an 841-amino-acid chain: Probable inorganic carbon transporter subunit DabA 1 (841 aa).

Zn(2+)-binding residues include C352, D354, H536, and C551.

Belongs to the inorganic carbon transporter (TC 9.A.2) DabA family. Forms a complex with DabB. Zn(2+) serves as cofactor.

Its subcellular location is the cell inner membrane. Its function is as follows. Part of an energy-coupled inorganic carbon pump. In Bradyrhizobium sp. (strain ORS 278), this protein is Probable inorganic carbon transporter subunit DabA 1.